A 218-amino-acid polypeptide reads, in one-letter code: Hypoxanthine-guanine phosphoribosyltransferase (218 aa).

N-acetylalanine is present on alanine 2. Lysine 69 serves as a coordination point for GMP. Lysine 103 is modified (N6-acetyllysine). A Glycyl lysine isopeptide (Lys-Gly) (interchain with G-Cter in SUMO1); alternate cross-link involves residue lysine 115. A Glycyl lysine isopeptide (Lys-Gly) (interchain with G-Cter in SUMO2); alternate cross-link involves residue lysine 115. Residues 134-142, lysine 166, 186-188, and aspartate 194 each bind GMP; these read EDIIDTGKT and KFV. Residue aspartate 138 is the Proton acceptor of the active site. Threonine 142 carries the post-translational modification Phosphothreonine. Aspartate 194 is a binding site for Mg(2+).

The protein belongs to the purine/pyrimidine phosphoribosyltransferase family. As to quaternary structure, homotetramer. Mg(2+) is required as a cofactor.

The protein resides in the cytoplasm. The enzyme catalyses IMP + diphosphate = hypoxanthine + 5-phospho-alpha-D-ribose 1-diphosphate. It catalyses the reaction GMP + diphosphate = guanine + 5-phospho-alpha-D-ribose 1-diphosphate. It functions in the pathway purine metabolism; IMP biosynthesis via salvage pathway; IMP from hypoxanthine: step 1/1. Converts guanine to guanosine monophosphate, and hypoxanthine to inosine monophosphate. Transfers the 5-phosphoribosyl group from 5-phosphoribosylpyrophosphate onto the purine. Plays a central role in the generation of purine nucleotides through the purine salvage pathway. The chain is Hypoxanthine-guanine phosphoribosyltransferase (HPRT1) from Pan troglodytes (Chimpanzee).